A 276-amino-acid polypeptide reads, in one-letter code: MAGMGKPYGGRPGDAFEGLVQRIRLIVPATLRGGGGESGPYSPSNPPSRCAFQFHGQDGSDEAFPIEYVLRLMNDWADVPCNPYLRVQNTGVSVLFQGFFNRPHGAPGGAITAEQTNVILHSTETTGLSLGDLDDVKGRLGLDARPMMASMWISCFVRMPRVQLAFRFMGPEDAVRTRRILCRAAEQALARRRRSRRSQDDYGAVVVAAAHHSSGAPGPGVAASGPPAPPGRGPARPWHQAVQLFRAPRPGPPALLLLAAGLFLGAAIWWAVGARL.

Over 1 to 253 (MAGMGKPYGG…LFRAPRPGPP (253 aa)) the chain is Perinuclear space. A compositionally biased stretch (low complexity) spans 212–225 (HSSGAPGPGVAASG). The segment at 212 to 237 (HSSGAPGPGVAASGPPAPPGRGPARP) is disordered. A helical transmembrane segment spans residues 254 to 274 (ALLLLAAGLFLGAAIWWAVGA). The Nuclear segment spans residues 275–276 (RL).

The protein belongs to the herpesviridae NEC2 protein family. Forms a heterohexameric complex with NEC1. Phosphorylated.

It localises to the host nucleus inner membrane. Its function is as follows. Plays an essential role in virion nuclear egress, the first step of virion release from infected cell. Within the host nucleus, NEC1 interacts with the newly formed capsid through the vertexes and directs it to the inner nuclear membrane by associating with NEC2. Induces the budding of the capsid at the inner nuclear membrane as well as its envelopment into the perinuclear space. There, the NEC1/NEC2 complex promotes the fusion of the enveloped capsid with the outer nuclear membrane and the subsequent release of the viral capsid into the cytoplasm where it will reach the secondary budding sites in the host Golgi or trans-Golgi network. In Homo sapiens (Human), this protein is Nuclear egress protein 2.